The primary structure comprises 312 residues: tRNA dimethylallyltransferase (312 aa).

Residue 11-18 coordinates ATP; sequence GPTAVGKT. Substrate is bound at residue 13–18; that stretch reads TAVGKT. Residues 159–163 form an interaction with substrate tRNA region; sequence QRVLR.

Belongs to the IPP transferase family. As to quaternary structure, monomer. The cofactor is Mg(2+).

It catalyses the reaction adenosine(37) in tRNA + dimethylallyl diphosphate = N(6)-dimethylallyladenosine(37) in tRNA + diphosphate. In terms of biological role, catalyzes the transfer of a dimethylallyl group onto the adenine at position 37 in tRNAs that read codons beginning with uridine, leading to the formation of N6-(dimethylallyl)adenosine (i(6)A). The sequence is that of tRNA dimethylallyltransferase from Macrococcus caseolyticus (strain JCSC5402) (Macrococcoides caseolyticum).